The primary structure comprises 403 residues: Presqualene diphosphate synthase (403 aa).

Mg(2+)-binding residues include Asp-84, Glu-87, and Asp-88.

This sequence belongs to the phytoene/squalene synthase family. Requires Mg(2+) as cofactor.

The enzyme catalyses 2 (2E,6E)-farnesyl diphosphate = presqualene diphosphate + diphosphate. In terms of biological role, catalyzes the biosynthesis of presqualene diphosphate (PSPP). Works in combination with SSL-2 or SSL-3 to produce respectively squalene or botryococcene. In most other species, farnesyl diphosphate (FPP) is converted into squalene in a two-step reaction by a single enzyme. The polypeptide is Presqualene diphosphate synthase (SSL-1) (Botryococcus braunii (Green alga)).